We begin with the raw amino-acid sequence, 330 residues long: Protein-lysine N-methyltransferase EEF2KMT (330 aa).

Methionine 1 carries the post-translational modification N-acetylmethionine. Residues tryptophan 139, 165 to 167, tryptophan 228, and alanine 247 each bind S-adenosyl-L-methionine; that span reads GSG.

It belongs to the class I-like SAM-binding methyltransferase superfamily. EEF2KMT family. As to quaternary structure, interacts with FAM86B2 and FAM86C1P.

It localises to the cytoplasm. The enzyme catalyses L-lysyl-[protein] + 3 S-adenosyl-L-methionine = N(6),N(6),N(6)-trimethyl-L-lysyl-[protein] + 3 S-adenosyl-L-homocysteine + 3 H(+). Catalyzes the trimethylation of eukaryotic elongation factor 2 (EEF2) on 'Lys-525'. The polypeptide is Protein-lysine N-methyltransferase EEF2KMT (Homo sapiens (Human)).